A 130-amino-acid chain; its full sequence is Ribosome-binding factor A (130 aa).

It belongs to the RbfA family. In terms of assembly, monomer. Binds 30S ribosomal subunits, but not 50S ribosomal subunits or 70S ribosomes.

It is found in the cytoplasm. Its function is as follows. One of several proteins that assist in the late maturation steps of the functional core of the 30S ribosomal subunit. Associates with free 30S ribosomal subunits (but not with 30S subunits that are part of 70S ribosomes or polysomes). Required for efficient processing of 16S rRNA. May interact with the 5'-terminal helix region of 16S rRNA. The chain is Ribosome-binding factor A from Flavobacterium psychrophilum (strain ATCC 49511 / DSM 21280 / CIP 103535 / JIP02/86).